A 584-amino-acid polypeptide reads, in one-letter code: MAPLSDFEKQRQENIQRNKDLLRKLNLDSATDSISREIPNQRQANGAKKRKTNNAAKPIKKEPQEPSRRSRRLAGVTMENTEEYQKVKEEMEEAERKKKELEKLKSTRLFGNFHLIDLVTDKRSGDMKFEKKVLKLPNEIKKEENNTKEIKEEEDDHLQDDDINIESDNKVLEILKDLGDKFSAGDFYDLIRNSSSDYDDKGLESKRNEFDNLKLFERFDPLDIKITHQRITAINFHPSKTDRVITAGDKVGNLGIWAVDSTEDEDPAITILKPHGRSIAKILTPHSNPSKIYSCAYDGSVRELDLNKLESSEVIYLKDPYESQDYPLAVSDINLCQEGNPNVLYLTTLGGHFYQHDLRTPFKSIKPNSLLRLHDKKIGSFCINPNLSHQIATASLDRTFRIWDLRNISKSNSSWSEYEDQISPHVYGSYSSRLSVSSVDWNYENRLVCNGYDDTINIFDLSSESSELPPVTEWSKTYQTGTKNKDEQIPTNIKPFTRIKHNCQTGRWVSILKSRWQASPGDGIQKFVIANMNRGLDIYDQKGQILAHLTDSEKVGAVPAVAAMHPIENWCVGGSASGKLYLFE.

The segment covering 29-44 (SATDSISREIPNQRQA) has biased composition (polar residues). A disordered region spans residues 29–90 (SATDSISREI…TEEYQKVKEE (62 aa)). The segment covering 59 to 68 (IKKEPQEPSR) has biased composition (basic and acidic residues). Positions 76–110 (VTMENTEEYQKVKEEMEEAERKKKELEKLKSTRLF) form a coiled coil. WD repeat units follow at residues 226-267 (ITHQ…DEDP), 274-314 (PHGR…SSEV), 373-413 (LHDK…KSNS), 431-469 (SSRL…SELP), 506-549 (GRWV…LAHL), and 553-584 (EKVG…YLFE).

The protein belongs to the WD repeat DDB2/WDR76 family.

Its function is as follows. DNA-binding protein that binds to both single- and double-stranded DNA. Binds preferentially to UV-damaged DNA. May be involved in DNA-metabolic processes. The sequence is that of DNA damage-binding protein CMR1 from Debaryomyces hansenii (strain ATCC 36239 / CBS 767 / BCRC 21394 / JCM 1990 / NBRC 0083 / IGC 2968) (Yeast).